The sequence spans 208 residues: MSIEKAKEDFKYLINRGYKKDVALNFVANHYKLSKEDRLKIIRTTHSDKEIKLTKRKLKKLKDFKGKTIYIDGFNVLISLEALIKGNKIVLCDDNIYRDFENVYGKYKINEYSDKAISLLLEILKHYNIKAVIYLDAQVSKSGILAKKIREKMKAFSIEGEVFCVKNCDYELKNKEVVATSDSVIIKSENVKYVVDLIAEAIEYLKKK.

This is an uncharacterized protein from Methanocaldococcus jannaschii (strain ATCC 43067 / DSM 2661 / JAL-1 / JCM 10045 / NBRC 100440) (Methanococcus jannaschii).